We begin with the raw amino-acid sequence, 109 residues long: Translation initiation factor IF-1, chloroplastic (109 aa).

Residues 18-93 (KSLNQEKENL…TRGRIIYRLK (76 aa)) form the S1-like domain.

It belongs to the IF-1 family. Component of the 30S ribosomal translation pre-initiation complex which assembles on the 30S ribosome in the order IF-2 and IF-3, IF-1 and N-formylmethionyl-tRNA(fMet); mRNA recruitment can occur at any time during PIC assembly.

The protein resides in the plastid. Its subcellular location is the chloroplast. In terms of biological role, one of the essential components for the initiation of protein synthesis. Stabilizes the binding of IF-2 and IF-3 on the 30S subunit to which N-formylmethionyl-tRNA(fMet) subsequently binds. Helps modulate mRNA selection, yielding the 30S pre-initiation complex (PIC). Upon addition of the 50S ribosomal subunit IF-1, IF-2 and IF-3 are released leaving the mature 70S translation initiation complex. This is Translation initiation factor IF-1, chloroplastic from Tupiella akineta (Green alga).